A 219-amino-acid polypeptide reads, in one-letter code: UPF0502 protein HCH_06091 (219 aa).

It belongs to the UPF0502 family.

The chain is UPF0502 protein HCH_06091 from Hahella chejuensis (strain KCTC 2396).